The following is a 399-amino-acid chain: MSGAEEAGGGGPAAGPAGAVPAGVGVGVGPGAAAGPAAAALGEAAGPGIPDEAGLAGARQLQEAAGDPDAPPKKRLRAAEAAEAAAAAVAAGSGKLEERLYSVLCCTVCLDLPKASVYQCTNGHLMCAGCFIHLLADARLKEEQATCPNCRCEISKSLCCRNLAVEKAVSELPSECGFCLRQFPRSLLERHQKEECQDRVTQCKYKRIGCPWHGPFHELTVHEAACAHPTKTGNELMEILDEMDQSHRKEMQLYNSIFSLLSFEKIGYTEVQFRPYRTDDFITRLYYETPRFTVLNQTWVLKARVNDSERNPNLSCKRTLSFQLLLKSKVTAPLECSFLLLKGPYDDVRISPVIYHFVFTNESNETDYVPLPIIDSVECNKLLAAKNINLRLFLFQIQK.

Gly residues predominate over residues 1–13 (MSGAEEAGGGGPA). The tract at residues 1–20 (MSGAEEAGGGGPAAGPAGAV) is disordered. The RING-type; degenerate zinc-finger motif lies at 106-151 (CTVCLDLPKASVYQCTNGHLMCAGCFIHLLADARLKEEQATCPNCR). The TRAF-type zinc-finger motif lies at 152–210 (CEISKSLCCRNLAVEKAVSELPSECGFCLRQFPRSLLERHQKEECQDRVTQCKYKRIGC).

This sequence belongs to the ZFTRAF1 family. In terms of assembly, interacts with LGALS3.

The protein resides in the cytoplasm. It is found in the perinuclear region. This is Zinc finger TRAF-type-containing protein 1 from Rattus norvegicus (Rat).